The following is a 263-amino-acid chain: Protein PYRICULARIA ORYZAE RESISTANCE 21 (263 aa).

The 68-residue stretch at 1–68 (MGILVISVDL…IWCKAGKIIK (68 aa)) folds into the HMA domain. A metal cation contacts are provided by Cys12 and Cys15. The tract at residues 126 to 153 (CEKPKPCEKPPPCKPEEPPKPPPEKPPP) is disordered. The span at 139-153 (KPEEPPKPPPEKPPP) shows a compositional bias: basic and acidic residues.

Involved in defense responses. Contributes to slowing defense responses toward Magnaporthe oryzae. The polypeptide is Protein PYRICULARIA ORYZAE RESISTANCE 21 (Oryza sativa subsp. indica (Rice)).